The sequence spans 581 residues: Solute carrier family 15 member 3 (581 aa).

Positions Met-1–Gly-14 are enriched in basic and acidic residues. The segment at Met-1–Gly-26 is disordered. The helical transmembrane segment at Val-38–Leu-58 threads the bilayer. N-linked (GlcNAc...) asparagine glycans are attached at residues Asn-61 and Asn-66. The next 3 membrane-spanning stretches (helical) occupy residues Ala-76 to Val-96, Ala-103 to Phe-123, and Pro-155 to Val-175. Asn-178 carries an N-linked (GlcNAc...) asparagine glycan. Residues Asn-200–Ile-220 form a helical membrane-spanning segment. An N-linked (GlcNAc...) asparagine glycan is attached at Asn-223. 2 helical membrane-spanning segments follow: residues Ile-232–Ile-252 and Phe-310–Tyr-330. The N-linked (GlcNAc...) asparagine glycan is linked to Asn-356. Helical transmembrane passes span Thr-369–Leu-389 and Met-411–Glu-431. The N-linked (GlcNAc...) asparagine glycan is linked to Asn-439. Helical transmembrane passes span Ile-458–Pro-478, Gly-497–Leu-517, and Leu-540–Ala-560.

The protein belongs to the major facilitator superfamily. Proton-dependent oligopeptide transporter (POT/PTR) (TC 2.A.17) family.

It localises to the lysosome membrane. Its subcellular location is the endosome membrane. The enzyme catalyses glycylglycylglycine(out) + n H(+)(out) = glycylglycylglycine(in) + n H(+)(in). It carries out the reaction carnosine(out) + n H(+)(out) = carnosine(in) + n H(+)(in). The catalysed reaction is L-histidine(out) + n H(+)(out) = L-histidine(in) + n H(+)(in). It catalyses the reaction N-acetyl-D-muramoyl-L-alanyl-D-isoglutamine(out) + n H(+)(out) = N-acetyl-D-muramoyl-L-alanyl-D-isoglutamine(in) + n H(+)(in). Proton-coupled amino-acid transporter that transports free histidine and certain di- and tripeptides, and is involved in innate immune response. Also able to transport carnosine. Involved in the detection of microbial pathogens by toll-like receptors (TLRs) and NOD-like receptors (NLRs), probably by mediating transport of bacterial peptidoglycans across the endolysosomal membrane: catalyzes the transport of certain bacterial peptidoglycans, such as muramyl dipeptide (MDP), the NOD2 ligand. This Homo sapiens (Human) protein is Solute carrier family 15 member 3.